The following is a 379-amino-acid chain: Armadillo repeat-containing X-linked protein 3 (379 aa).

Over 1–6 the chain is Mitochondrial intermembrane; the sequence is MGYARK. Mitochondrion outer membrane (MOM)-targeting sequence stretches follow at residues 1–6 and 26–37; these read MGYARK and RLTRGRKQNKEK. Residues 7–29 form a helical; Signal-anchor membrane-spanning segment; that stretch reads VGWVTAGLVIGAGACYCIYRLTR. Residues 30 to 379 lie on the Cytoplasmic side of the membrane; sequence GRKQNKEKMA…TERMFPKSQE (350 aa). The tract at residues 34-69 is disordered; that stretch reads NKEKMAEGGPGDVEDAGDCSGARYNDWSDDDDDSNE. A phosphoserine mark is found at Ser61, Ser67, and Ser72. Positions 89-98 are nuclear localization signal; sequence RARARARARA. Residue Ser110 is modified to Phosphoserine. ARM repeat units lie at residues 111 to 151, 153 to 192, and 233 to 272; these read PNSD…NNAA, AFNR…NLSV, and VTNE…NLAE.

The protein belongs to the eutherian X-chromosome-specific Armcx family. As to quaternary structure, interacts (via ARM domain) with MIRO1, MIRO2 and TRAK2. The interaction with Miro is calcium-dependent. Interacts with Sox10.

It localises to the mitochondrion outer membrane. The protein localises to the cytoplasm. The protein resides in the nucleus. In terms of biological role, regulates mitochondrial aggregation and transport in axons in living neurons. May link mitochondria to the Trak2-kinesin motor complex via its interaction with Miro and Trak2. Mitochondrial distribution and dynamics is regulated through Armcx3 protein degradation, which is promoted by PCK and negatively regulated by Wnt1. Enhances the Sox10-mediated transactivation of the neuronal acetylcholine receptor subunit alpha-3 and beta-4 subunit gene promoters. This is Armadillo repeat-containing X-linked protein 3 (Armcx3) from Rattus norvegicus (Rat).